The primary structure comprises 455 residues: tRNA modification GTPase MnmE (455 aa).

Residues R26, E86, and R125 each coordinate (6S)-5-formyl-5,6,7,8-tetrahydrofolate. The TrmE-type G domain maps to 222–376 (GLKTAIIGRP…VEEKINQIFF (155 aa)). N232 contributes to the K(+) binding site. Residues 232–237 (NVGKSS), 251–257 (TDIAGTT), and 276–279 (DTAG) contribute to the GTP site. S236 is a Mg(2+) binding site. Residues T251, I253, and T256 each contribute to the K(+) site. T257 lines the Mg(2+) pocket. Residue K455 participates in (6S)-5-formyl-5,6,7,8-tetrahydrofolate binding.

This sequence belongs to the TRAFAC class TrmE-Era-EngA-EngB-Septin-like GTPase superfamily. TrmE GTPase family. As to quaternary structure, homodimer. Heterotetramer of two MnmE and two MnmG subunits. K(+) serves as cofactor.

The protein localises to the cytoplasm. Exhibits a very high intrinsic GTPase hydrolysis rate. Involved in the addition of a carboxymethylaminomethyl (cmnm) group at the wobble position (U34) of certain tRNAs, forming tRNA-cmnm(5)s(2)U34. The protein is tRNA modification GTPase MnmE of Lactococcus lactis subsp. cremoris (strain MG1363).